A 320-amino-acid chain; its full sequence is Methenyltetrahydromethanopterin cyclohydrolase (320 aa).

This sequence belongs to the MCH family. As to quaternary structure, homodimer.

It localises to the cytoplasm. It carries out the reaction 5,10-methenyl-5,6,7,8-tetrahydromethanopterin + H2O = N(5)-formyl-5,6,7,8-tetrahydromethanopterin + H(+). It participates in one-carbon metabolism; methanogenesis from CO(2); 5,10-methenyl-5,6,7,8-tetrahydromethanopterin from CO(2): step 3/3. Catalyzes the reversible interconversion of 5-formyl-H(4)MPT to methenyl-H(4)MPT(+). This chain is Methenyltetrahydromethanopterin cyclohydrolase (mch), found in Methanothermobacter marburgensis (strain ATCC BAA-927 / DSM 2133 / JCM 14651 / NBRC 100331 / OCM 82 / Marburg) (Methanobacterium thermoautotrophicum).